A 360-amino-acid polypeptide reads, in one-letter code: Protein MGF 360-2L (360 aa).

It belongs to the asfivirus MGF 360 family.

Its function is as follows. Plays a role in virus cell tropism, and may be required for efficient virus replication in macrophages. The protein is Protein MGF 360-2L of Ornithodoros (relapsing fever ticks).